A 287-amino-acid polypeptide reads, in one-letter code: Protease HtpX (287 aa).

2 helical membrane passes run 4 to 24 (IMLF…VLNI) and 36 to 56 (LSGL…ISLM). His-143 is a binding site for Zn(2+). Glu-144 is an active-site residue. His-147 is a Zn(2+) binding site. Transmembrane regions (helical) follow at residues 158–178 (LMQG…ANIV) and 192–212 (MVYF…ASFI). Zn(2+) is bound at residue Glu-221.

Belongs to the peptidase M48B family. Zn(2+) serves as cofactor.

It localises to the cell inner membrane. The polypeptide is Protease HtpX (Vibrio parahaemolyticus serotype O3:K6 (strain RIMD 2210633)).